We begin with the raw amino-acid sequence, 107 residues long: Heme-degrading monooxygenase (107 aa).

The ABM domain occupies 2 to 94 (IIVTNTTKIT…YILDNKIAYY (93 aa)). N6 is a Fe cation binding site. H76 provides a ligand contact to heme.

It belongs to the antibiotic biosynthesis monooxygenase family. Heme-degrading monooxygenase IsdG subfamily. In terms of assembly, homodimer.

The protein localises to the cytoplasm. The enzyme catalyses heme b + 3 reduced [NADPH--hemoprotein reductase] + 3 O2 = biliverdin IXalpha + CO + Fe(2+) + 3 oxidized [NADPH--hemoprotein reductase] + 3 H2O + H(+). Its function is as follows. Allows bacterial pathogens to use the host heme as an iron source. Catalyzes the oxidative degradation of the heme macrocyclic porphyrin ring to the biliverdin in the presence of a suitable electron donor such as ascorbate or NADPH--cytochrome P450 reductase, with subsequent release of free iron. The chain is Heme-degrading monooxygenase from Bacillus mycoides (strain KBAB4) (Bacillus weihenstephanensis).